Reading from the N-terminus, the 355-residue chain is MDKYLIKLPNKNINDMVSDKKEVVKKETPKMTGRQAKKDTPKQEKEKENTQEDNTPKQNKAGRTGRSSIKRKNLDTPEVTQEKESVESENPPKRRSTRTTRSTRSMADGGTPSPEKEKPEKLPFIKYKGAIKYYTESQDIAASADDVMQWVEKQKEDVVPMAFDMEWPFSFQTGPGKSSVIQICVDEKCCYIYQLTNLKKLPSALVALINHPKVRLHGVNIKADFRKLQRDFPEVSADALIEKCVDLGVWCNVICQTGGRWSLERLANFICRKAMDKSKKVRMSKWHVIPLDENQLMYAAIDVYIGQVIYRDLEQREKTKLANEEKFKEENGETAFKAVKALGEKFLSKMNEVTL.

The disordered stretch occupies residues 1 to 121; that stretch reads MDKYLIKLPN…PSPEKEKPEK (121 aa). Composition is skewed to basic and acidic residues over residues 17-29, 36-50, and 72-92; these read VSDK…KETP, AKKD…KENT, and KNLD…ENPP. Phosphoserine is present on residues S105 and S113. The region spanning 147-315 is the 3'-5' exonuclease domain; it reads VMQWVEKQKE…GQVIYRDLEQ (169 aa). Mg(2+) is bound by residues D164, E166, and D302.

The protein belongs to the WRNexo family.

The protein localises to the nucleus. Functionally, has exonuclease activity on both single-stranded and duplex templates bearing overhangs, but not blunt ended duplex DNA, and cleaves in a 3'-5' direction. Essential for the formation of DNA replication focal centers. Has an important role in maintaining genome stability. In Drosophila ananassae (Fruit fly), this protein is 3'-5' exonuclease.